The following is a 672-amino-acid chain: Glycerophosphocholine phosphodiesterase GPCPD1 (672 aa).

The region spanning 1–115 (MTPSQVAFEI…IIIDDGQFGI (115 aa)) is the CBM20 domain. Residues K70 and 88–89 (HK) each bind substrate. 2 positions are modified to phosphoserine: S175 and S424. One can recognise a GP-PDE domain in the interval 318-618 (PLDVGHRGAG…DRIYDWMPEQ (301 aa)). Phosphotyrosine is present on Y608.

This sequence belongs to the glycerophosphoryl diester phosphodiesterase family. As to expression, widely expressed, with highest expression in spinal chord.

The protein localises to the cytoplasm. It localises to the cytosol. It catalyses the reaction sn-glycerol 3-phosphocholine + H2O = sn-glycerol 3-phosphate + choline + H(+). Its function is as follows. May be involved in the negative regulation of skeletal muscle differentiation, independently of its glycerophosphocholine phosphodiesterase activity. The polypeptide is Glycerophosphocholine phosphodiesterase GPCPD1 (GPCPD1) (Homo sapiens (Human)).